Reading from the N-terminus, the 491-residue chain is Probable glycine dehydrogenase (decarboxylating) subunit 2 (491 aa).

Lys-273 carries the post-translational modification N6-(pyridoxal phosphate)lysine.

This sequence belongs to the GcvP family. C-terminal subunit subfamily. As to quaternary structure, the glycine cleavage system is composed of four proteins: P, T, L and H. In this organism, the P 'protein' is a heterodimer of two subunits. Requires pyridoxal 5'-phosphate as cofactor.

The enzyme catalyses N(6)-[(R)-lipoyl]-L-lysyl-[glycine-cleavage complex H protein] + glycine + H(+) = N(6)-[(R)-S(8)-aminomethyldihydrolipoyl]-L-lysyl-[glycine-cleavage complex H protein] + CO2. The glycine cleavage system catalyzes the degradation of glycine. The P protein binds the alpha-amino group of glycine through its pyridoxal phosphate cofactor; CO(2) is released and the remaining methylamine moiety is then transferred to the lipoamide cofactor of the H protein. This is Probable glycine dehydrogenase (decarboxylating) subunit 2 from Bacillus cereus (strain B4264).